We begin with the raw amino-acid sequence, 114 residues long: Cell cycle protein GpsB (114 aa).

The stretch at 42-77 (YQKMADMNNEVVKLSEENHKLKKELEELRLRVATSR) forms a coiled coil. The interval 74–99 (ATSRPQDNKSFSSNNTTTNTSSNNVD) is disordered. Residues 85–97 (SSNNTTTNTSSNN) show a composition bias toward low complexity.

This sequence belongs to the GpsB family. In terms of assembly, forms polymers through the coiled coil domains. Interacts with PBP1, MreC and EzrA.

The protein localises to the cytoplasm. Functionally, divisome component that associates with the complex late in its assembly, after the Z-ring is formed, and is dependent on DivIC and PBP2B for its recruitment to the divisome. Together with EzrA, is a key component of the system that regulates PBP1 localization during cell cycle progression. Its main role could be the removal of PBP1 from the cell pole after pole maturation is completed. Also contributes to the recruitment of PBP1 to the division complex. Not essential for septum formation. The polypeptide is Cell cycle protein GpsB (Staphylococcus aureus (strain Mu3 / ATCC 700698)).